The following is a 79-amino-acid chain: MDSIHGHEVLNMMIESGEQYTHASLEAAIKARFGEQARFHTCSAEGMTAGELVAFLAAKGKFIPSKDGFSTDQSKICRH.

This is an uncharacterized protein from Escherichia coli (strain K12).